The sequence spans 453 residues: UDP-glycosyltransferase 74E2 (453 aa).

The Proton acceptor role is filled by His17. His17 serves as a coordination point for an anthocyanidin. The active-site Charge relay is Asp109. UDP-alpha-D-glucose is bound by residues Thr131, Gln334, His349, Trp352, Asn353, Ser354, Glu357, Asp373, and Gln374.

This sequence belongs to the UDP-glycosyltransferase family. Expressed in roots, cotyledons and leaf hydathodes.

It catalyses the reaction (indol-3-yl)butanoate + UDP-alpha-D-glucose = 4-(indol-3-yl)butanoyl-beta-D-glucose + UDP. Functionally, glucosyltransferase that acts on the auxin indole-3-butyric acid (IBA). Mediates abiotic stress responses and stress-induced morphological adaptations by regulating auxin homeostasis. Possesses low activity in vitro on jasmonate (JA) and the synthetic auxin analog naphthaleneacetic acid (NAA). This is UDP-glycosyltransferase 74E2 (UGT74E2) from Arabidopsis thaliana (Mouse-ear cress).